A 70-amino-acid polypeptide reads, in one-letter code: uncharacterized protein (70 aa).

It localises to the plastid. The protein localises to the chloroplast. This is an uncharacterized protein from Mesostigma viride (Green alga).